The following is a 364-amino-acid chain: Lysophosphatidic acid receptor 1 (364 aa).

At 1–50 (MAAAFTSSPVVSQPQFTAMNEQQCFSNESIAFFYNRSGKYLATEWNTVTK) the chain is on the extracellular side. Disulfide bonds link cysteine 24–cysteine 190 and cysteine 188–cysteine 195. 2 N-linked (GlcNAc...) asparagine glycosylation sites follow: asparagine 27 and asparagine 35. Residue lysine 39 coordinates a 1-acyl-sn-glycero-3-phosphate. A helical membrane pass occupies residues 51–75 (LVMGLGITVCIFIMLANLLVMVAIY). Over 76–83 (VNRRFHFP) the chain is Cytoplasmic. A helical transmembrane segment spans residues 84–107 (IYYLMANLAAADFFAGLAYFYLMF). Topologically, residues 108–121 (NTGPNTRRLTVSTW) are extracellular. The helical transmembrane segment at 122-144 (LLRQGLIDTSLTVSVANLLAIAI) threads the bilayer. 124 to 129 (RQGLID) provides a ligand contact to a 1-acyl-sn-glycero-3-phosphate. Residues 145–163 (ERHITVFRMQLHARMSNRR) are Cytoplasmic-facing. Residues 164 to 184 (VVVVIVVIWTMAIVMGAIPSV) traverse the membrane as a helical segment. The Extracellular portion of the chain corresponds to 185-204 (GWNCICDIENCSNMAPLYSD). The helical transmembrane segment at 205–225 (SYLVFWAIFNLVTFVVMVVLY) threads the bilayer. Tryptophan 210 contacts a 1-acyl-sn-glycero-3-phosphate. Residues 226 to 255 (AHIFGYVRQRTMRMSRHSSGPRRNRDTMMS) are Cytoplasmic-facing. A helical transmembrane segment spans residues 256–280 (LLKTVVIVLGAFIICWTPGLVLLLL). Residues 281–294 (DVCCPQCDVLAYEK) lie on the Extracellular side of the membrane. Cysteine 284 and cysteine 287 are disulfide-bonded. A helical membrane pass occupies residues 295–315 (FFLLLAEFNSAMNPIIYSYRD). Residues 316 to 364 (KEMSATFRQILCCQRSENTSGPTEGSDRSASSLNHTILAGVHSNDHSVV) are Cytoplasmic-facing. Serine 341 carries the post-translational modification Phosphoserine. Threonine 351 carries the phosphothreonine modification.

The protein belongs to the G-protein coupled receptor 1 family. As to quaternary structure, interacts with RALA and GRK2. Interacts with GNAQ and GNA13. Interacts with CD14; the interaction is enhanced by exposure to bacterial lipopolysaccharide (LPS). In terms of processing, N-glycosylated.

The protein localises to the cell surface. It is found in the cell membrane. The protein resides in the endosome. Functionally, receptor for lysophosphatidic acid (LPA). Plays a role in the reorganization of the actin cytoskeleton, cell migration, differentiation and proliferation, and thereby contributes to the responses to tissue damage and infectious agents. Activates downstream signaling cascades via the G(i)/G(o), G(12)/G(13), and G(q) families of heteromeric G proteins. Signaling inhibits adenylyl cyclase activity and decreases cellular cAMP levels. Signaling triggers an increase of cytoplasmic Ca(2+) levels. Activates RALA; this leads to the activation of phospholipase C (PLC) and the formation of inositol 1,4,5-trisphosphate. Signaling mediates activation of down-stream MAP kinases. Contributes to the regulation of cell shape. Promotes Rho-dependent reorganization of the actin cytoskeleton in neuronal cells and neurite retraction. Promotes the activation of Rho and the formation of actin stress fibers. Promotes formation of lamellipodia at the leading edge of migrating cells via activation of RAC1. Through its function as LPA receptor, plays a role in chemotaxis and cell migration, including responses to injury and wounding. Plays a role in triggering inflammation in response to bacterial lipopolysaccharide (LPS) via its interaction with CD14. Promotes cell proliferation in response to LPA. Inhibits the intracellular ciliogenesis pathway in response to LPA and through AKT1 activation. Required for normal skeleton development. May play a role in osteoblast differentiation. Required for normal brain development. Required for normal proliferation, survival and maturation of newly formed neurons in the adult dentate gyrus. Plays a role in pain perception and in the initiation of neuropathic pain. The protein is Lysophosphatidic acid receptor 1 (LPAR1) of Bos taurus (Bovine).